Reading from the N-terminus, the 415-residue chain is U-box domain-containing protein 29 (415 aa).

Residues 11-85 (TVPSFFKCPI…NIWSDSIGRR (75 aa)) form the U-box domain. 2 ARM repeats span residues 221–263 (KSKL…TISK) and 265–307 (KRVR…TLSS).

In terms of assembly, binds to SD129 and SD25.

The catalysed reaction is S-ubiquitinyl-[E2 ubiquitin-conjugating enzyme]-L-cysteine + [acceptor protein]-L-lysine = [E2 ubiquitin-conjugating enzyme]-L-cysteine + N(6)-ubiquitinyl-[acceptor protein]-L-lysine.. Its pathway is protein modification; protein ubiquitination. In terms of biological role, functions as an E3 ubiquitin ligase. This is U-box domain-containing protein 29 (PUB29) from Arabidopsis thaliana (Mouse-ear cress).